Consider the following 354-residue polypeptide: Serum paraoxonase/lactonase 3 (354 aa).

C42 and C352 form a disulfide bridge. An N-linked (GlcNAc...) asparagine glycan is attached at N50. Ca(2+)-binding residues include E53 and D54. Residue H114 is the Proton acceptor of the active site. I116 lines the Ca(2+) pocket. Residue S165 is modified to Phosphoserine. Residues N167, D168, N223, D268, and N269 each coordinate Ca(2+). N-linked (GlcNAc...) asparagine glycans are attached at residues N269 and N323.

The protein belongs to the paraoxonase family. In terms of assembly, homodimer. Ca(2+) serves as cofactor. Glycosylated. Post-translationally, the signal sequence is not cleaved.

The protein resides in the secreted. It localises to the extracellular space. It catalyses the reaction a phenyl acetate + H2O = a phenol + acetate + H(+). The enzyme catalyses An aryl dialkyl phosphate + H2O = dialkyl phosphate + an aryl alcohol.. The catalysed reaction is an N-acyl-L-homoserine lactone + H2O = an N-acyl-L-homoserine + H(+). Functionally, has low activity towards the organophosphate paraxon and aromatic carboxylic acid esters. Rapidly hydrolyzes lactones such as statin prodrugs (e.g. lovastatin). Hydrolyzes aromatic lactones and 5- or 6-member ring lactones with aliphatic substituents but not simple lactones or those with polar substituents. The sequence is that of Serum paraoxonase/lactonase 3 (Pon3) from Rattus norvegicus (Rat).